A 234-amino-acid polypeptide reads, in one-letter code: Fibronectin type III domain-containing protein 4 (234 aa).

A signal peptide spans 1 to 44; it reads MPSGCHSSPPSGLRGDMASLVPLSPYLSPTVLLLVSCDLGFVRA. At 45–167 the chain is on the extracellular side; sequence DRPPSPVNVT…GLDGERPLQT (123 aa). The Fibronectin type-III domain occupies 47 to 140; the sequence is PPSPVNVTVT…PRVHFRTLKG (94 aa). N52, N97, and N147 each carry an N-linked (GlcNAc...) asparagine glycan. Residues 122 to 160 form a disordered region; it reads GLRGESPPGPRVHFRTLKGSDRLPSNSSSPGDITVEGLD. Residues 168–188 form a helical membrane-spanning segment; it reads GEVVIIVVVLLMWAAVIGLFC. The Cytoplasmic portion of the chain corresponds to 189–234; that stretch reads RQYDIIKDNDSNNNPKEKGKGPEQSPQGRPVGTRQKKSPSINTIDV. Residues 197–209 show a composition bias toward basic and acidic residues; sequence NDSNNNPKEKGKG. Positions 197-234 are disordered; the sequence is NDSNNNPKEKGKGPEQSPQGRPVGTRQKKSPSINTIDV.

In terms of tissue distribution, highly expressed in the liver and the brain, including in the cortex, hypothalamus and hippocampus. Also expressed in adipose tissue.

The protein localises to the membrane. Its subcellular location is the secreted. Has anti-inflammatory properties. In the colon, acts on macrophages to down-regulate inflammation. May suppress osteoclastogenesis and mature osteoclast resorptive function. In white adipose tissue, decreases local inflammation, via interaction with GPR116. Also required for proper systemic glucose tolerance, specifically sensitizing white adipocytes to insulin and promoting glucose uptake. The insulin sensitizing function in adipose tissue is mediated by interaction with ADGRF5/GPR116 and activation of cAMP signaling. This chain is Fibronectin type III domain-containing protein 4 (FNDC4), found in Homo sapiens (Human).